Consider the following 122-residue polypeptide: Large ribosomal subunit protein uL14 (122 aa).

This sequence belongs to the universal ribosomal protein uL14 family. As to quaternary structure, part of the 50S ribosomal subunit. Forms a cluster with proteins L3 and L19. In the 70S ribosome, L14 and L19 interact and together make contacts with the 16S rRNA in bridges B5 and B8.

Functionally, binds to 23S rRNA. Forms part of two intersubunit bridges in the 70S ribosome. In Enterococcus faecalis (strain ATCC 700802 / V583), this protein is Large ribosomal subunit protein uL14.